The primary structure comprises 119 residues: Small ribosomal subunit protein bS16 (119 aa).

The protein belongs to the bacterial ribosomal protein bS16 family.

This is Small ribosomal subunit protein bS16 from Amoebophilus asiaticus (strain 5a2).